The sequence spans 534 residues: NEDD8-activating enzyme E1 regulatory subunit (534 aa).

N-acetylalanine is present on Ala2. N6-acetyllysine is present on residues Lys6 and Lys341. An interaction with UBA3 region spans residues Asp331–Asn344.

Belongs to the ubiquitin-activating E1 family. ULA1 subfamily. In terms of assembly, heterodimer of UBA3 and NAE1. The complex binds NEDD8 and UBE2M. Binds APP and TP53BP2. In terms of processing, ubiquitinated by TRIP12, leading to its degradation by the proteasome. Expressed throughout the brain. In hippocampus, strongly expressed in granule cells and in the pyramidal cell layer. Strongly expressed in the piriform cortex. In the cerebellum, expressed only in Purkinje cells.

It localises to the cell membrane. Its pathway is protein modification; protein neddylation. With respect to regulation, binding of TP53BP2 to the regulatory subunit NAE1 decreases neddylation activity. Its function is as follows. Regulatory subunit of the dimeric UBA3-NAE1 E1 enzyme. E1 activates NEDD8 by first adenylating its C-terminal glycine residue with ATP, thereafter linking this residue to the side chain of the catalytic cysteine, yielding a NEDD8-UBA3 thioester and free AMP. E1 finally transfers NEDD8 to the catalytic cysteine of UBE2M. Necessary for cell cycle progression through the S-M checkpoint. Overexpression of NAE1 causes apoptosis through deregulation of NEDD8 conjugation. The covalent attachment of NEDD8 to target proteins is known as 'neddylation' and the process is involved in the regulation of cell growth, viability and development. The protein is NEDD8-activating enzyme E1 regulatory subunit (Nae1) of Rattus norvegicus (Rat).